Consider the following 423-residue polypeptide: Lysosomal acid phosphatase (423 aa).

An N-terminal signal peptide occupies residues 1–30; sequence MAGRQSGWSQAALLQFLLGMCLMVMPPIQA. At 31–380 the chain is on the lumenal side; that stretch reads RSLRFVTLLY…QLASDTADTE (350 aa). His42 serves as the catalytic Nucleophile. Residues Asn92, Asn133, Asn167, Asn177, Asn191, Asn197, and Asn267 are each glycosylated (N-linked (GlcNAc...) asparagine). Intrachain disulfides connect Cys159/Cys370, Cys212/Cys310, and Cys345/Cys349. The active-site Proton donor is the Asp287. N-linked (GlcNAc...) asparagine glycosylation is found at Asn322 and Asn331. The helical transmembrane segment at 381–401 threads the bilayer; it reads VIVALAVCGSILFLLIVLLLT. Residues 402–423 are Cytoplasmic-facing; that stretch reads VLFRMQAQPPGYHHVADREDHA.

It belongs to the histidine acid phosphatase family. In terms of processing, the membrane-bound form is converted to the soluble form by sequential proteolytic processing. First, the C-terminal cytoplasmic tail is removed. Cleavage by a lysosomal protease releases the soluble form in the lysosome lumen.

The protein resides in the lysosome membrane. The protein localises to the lysosome lumen. It catalyses the reaction a phosphate monoester + H2O = an alcohol + phosphate. This chain is Lysosomal acid phosphatase (Acp2), found in Rattus norvegicus (Rat).